A 2543-amino-acid chain; its full sequence is Highly reducing polyketide synthase GPY1 (2543 aa).

Residues 9–435 (REPIAIVSMA…GSTAHAVVEF (427 aa)) form the Ketosynthase family 3 (KS3) domain. Active-site for beta-ketoacyl synthase activity residues include Cys-182, His-318, and His-358. The interval 574-881 (TFTGQGAMWS…PFFATMLRNA (308 aa)) is malonyl-CoA:ACP transacylase (MAT) domain. The segment at 953–1089 (HEILGSRCRG…GRAAVLETSK (137 aa)) is N-terminal hotdog fold. The segment at 953–1253 (HEILGSRCRG…GLQMDRATSD (301 aa)) is dehydratase (DH) domain. The PKS/mFAS DH domain occupies 953 to 1256 (HEILGSRCRG…MDRATSDDNT (304 aa)). His-985 (proton acceptor; for dehydratase activity) is an active-site residue. Positions 1103-1256 (MPLKVPLKSY…MDRATSDDNT (154 aa)) are C-terminal hotdog fold. Residue Asp-1169 is the Proton donor; for dehydratase activity of the active site. The methyltransferase (CMet) domain stretch occupies residues 1399–1587 (NDLLYRFYEE…LDEWRNELAA (189 aa)). The interval 1830-2136 (GILESLTMAQ…IEGTSNKQVV (307 aa)) is enoyl reductase (ER) domain. The segment at 2161-2335 (TYIITGGLGG…ASSVDLGFVE (175 aa)) is ketoreductase (KR) domain. The Carrier domain maps to 2464–2541 (ALQPFVCTAL…DLSARVSRMI (78 aa)). Ser-2501 carries the post-translational modification O-(pantetheine 4'-phosphoryl)serine.

Highly reducing polyketide synthase; part of the gene cluster that mediates the biosynthesis of gibepyrone A, a 2H-pyran-2-one metabolite exhibiting a moderate antimicrobial activity against Gram-positive bacteria and yeasts. The highly reducing polyketide synthase GPY1 is sufficient to produce gibepyrone A. GPY1 uses an acetyl-CoA starter unit, three malonyl-CoA extender units, and two SAM-dependent methylations to establish the gibepyrone A carbon backbone, followed by product release upon intramolecular cyclization. The gibepyrone A derivatives gibepyrones B and D are produced by cluster-independent P450 monooxygenases, probably to protect the fungus from the toxic product. In contrast, the formation of gibepyrones E and F from gibepyrone A is a spontaneous process and independent of enzymatic activity. This is Highly reducing polyketide synthase GPY1 from Gibberella fujikuroi (strain CBS 195.34 / IMI 58289 / NRRL A-6831) (Bakanae and foot rot disease fungus).